A 252-amino-acid polypeptide reads, in one-letter code: Intraflagellar transport associated protein 2 (252 aa).

GTP-binding positions include 35–42 (GPPKAGKT) and 118–125 (WDVSGDKK).

This sequence belongs to the small GTPase superfamily. Rab family. As to quaternary structure, component of the IFT complex B composed of at least che-2, che-13, dyf-1, dyf-3, dyf-6, dyf-11, dyf-13, ift-20, ift-74, ift-81, ifta-2, osm-1, osm-5 and osm-6. Ciliated sensory neurons.

Its subcellular location is the cytoplasm. It is found in the cytoskeleton. It localises to the cilium axoneme. In terms of biological role, component of the intraflagellar transport (IFT) complex B required for transport of proteins in the motile cilium. May be required for ciliary entrance and transport of specific ciliary cargo proteins such as che-3 which are related to motility. Regulates specific signaling activities in the cilia, such as the daf-2/insulin receptor-like transduction pathway. This is Intraflagellar transport associated protein 2 from Caenorhabditis elegans.